A 379-amino-acid chain; its full sequence is UDP-4-amino-4-deoxy-L-arabinose--oxoglutarate aminotransferase (379 aa).

The residue at position 182 (K182) is an N6-(pyridoxal phosphate)lysine.

The protein belongs to the DegT/DnrJ/EryC1 family. ArnB subfamily. Homodimer. Pyridoxal 5'-phosphate serves as cofactor.

The catalysed reaction is UDP-4-amino-4-deoxy-beta-L-arabinose + 2-oxoglutarate = UDP-beta-L-threo-pentopyranos-4-ulose + L-glutamate. The protein operates within nucleotide-sugar biosynthesis; UDP-4-deoxy-4-formamido-beta-L-arabinose biosynthesis; UDP-4-deoxy-4-formamido-beta-L-arabinose from UDP-alpha-D-glucuronate: step 2/3. It participates in bacterial outer membrane biogenesis; lipopolysaccharide biosynthesis. Its function is as follows. Catalyzes the conversion of UDP-4-keto-arabinose (UDP-Ara4O) to UDP-4-amino-4-deoxy-L-arabinose (UDP-L-Ara4N). The modified arabinose is attached to lipid A and is required for resistance to polymyxin and cationic antimicrobial peptides. The polypeptide is UDP-4-amino-4-deoxy-L-arabinose--oxoglutarate aminotransferase (Escherichia coli O81 (strain ED1a)).